A 113-amino-acid polypeptide reads, in one-letter code: Large ribosomal subunit protein bL19 (113 aa).

This sequence belongs to the bacterial ribosomal protein bL19 family.

This protein is located at the 30S-50S ribosomal subunit interface and may play a role in the structure and function of the aminoacyl-tRNA binding site. This Corynebacterium glutamicum (strain R) protein is Large ribosomal subunit protein bL19.